A 193-amino-acid polypeptide reads, in one-letter code: Large ribosomal subunit protein uL5 (193 aa).

This sequence belongs to the universal ribosomal protein uL5 family. Part of the 50S ribosomal subunit; part of the 5S rRNA/L5/L18/L25 subcomplex. Contacts the 5S rRNA and the P site tRNA. Forms a bridge to the 30S subunit in the 70S ribosome.

Functionally, this is one of the proteins that bind and probably mediate the attachment of the 5S RNA into the large ribosomal subunit, where it forms part of the central protuberance. In the 70S ribosome it contacts protein S13 of the 30S subunit (bridge B1b), connecting the 2 subunits; this bridge is implicated in subunit movement. Contacts the P site tRNA; the 5S rRNA and some of its associated proteins might help stabilize positioning of ribosome-bound tRNAs. This chain is Large ribosomal subunit protein uL5, found in Rhizorhabdus wittichii (strain DSM 6014 / CCUG 31198 / JCM 15750 / NBRC 105917 / EY 4224 / RW1) (Sphingomonas wittichii).